The primary structure comprises 377 residues: Phospho-N-acetylmuramoyl-pentapeptide-transferase (377 aa).

A run of 11 helical transmembrane segments spans residues 9–29 (YITL…LVAG), 62–82 (MGGA…ADWI), 85–105 (FVWV…MDDY), 122–142 (FFWQ…AVSA), 155–175 (WVGS…VPFF), 178–198 (VSYP…IVGT), 210–230 (GLAI…AYVV), 247–267 (AAEL…FLWF), 274–294 (VFMG…IAVI), 299–319 (IVLF…MVQV), and 354–374 (QVVV…LSTL).

It belongs to the glycosyltransferase 4 family. MraY subfamily. Requires Mg(2+) as cofactor.

The protein resides in the cell inner membrane. The enzyme catalyses UDP-N-acetyl-alpha-D-muramoyl-L-alanyl-gamma-D-glutamyl-meso-2,6-diaminopimeloyl-D-alanyl-D-alanine + di-trans,octa-cis-undecaprenyl phosphate = di-trans,octa-cis-undecaprenyl diphospho-N-acetyl-alpha-D-muramoyl-L-alanyl-D-glutamyl-meso-2,6-diaminopimeloyl-D-alanyl-D-alanine + UMP. It participates in cell wall biogenesis; peptidoglycan biosynthesis. Its function is as follows. Catalyzes the initial step of the lipid cycle reactions in the biosynthesis of the cell wall peptidoglycan: transfers peptidoglycan precursor phospho-MurNAc-pentapeptide from UDP-MurNAc-pentapeptide onto the lipid carrier undecaprenyl phosphate, yielding undecaprenyl-pyrophosphoryl-MurNAc-pentapeptide, known as lipid I. The sequence is that of Phospho-N-acetylmuramoyl-pentapeptide-transferase from Bordetella parapertussis (strain 12822 / ATCC BAA-587 / NCTC 13253).